Consider the following 621-residue polypeptide: Acetolactate synthase (621 aa).

Positions 1 to 19 (MSAPTRRPAPDAPGAAGIA) are enriched in low complexity. Positions 1–39 (MSAPTRRPAPDAPGAAGIAPAPPAPAAKPAAGKPKRIGP) are disordered. Glutamate 89 is a thiamine diphosphate binding site. FAD contacts are provided by residues arginine 190, 296–317 (HGTV…LGTR), and 339–358 (DIDP…IVGD). Residues 432 to 512 (HDQMWAAQFI…IKVALINNGN (81 aa)) are thiamine pyrophosphate binding. Positions 483 and 510 each coordinate Mg(2+).

It belongs to the TPP enzyme family. Mg(2+) serves as cofactor. Requires thiamine diphosphate as cofactor.

It catalyses the reaction 2 pyruvate + H(+) = (2S)-2-acetolactate + CO2. The protein operates within amino-acid biosynthesis; L-isoleucine biosynthesis; L-isoleucine from 2-oxobutanoate: step 1/4. It participates in amino-acid biosynthesis; L-valine biosynthesis; L-valine from pyruvate: step 1/4. The sequence is that of Acetolactate synthase (ilvB) from Mycobacterium avium.